The following is a 470-amino-acid chain: Pyruvate kinase I (470 aa).

Residue arginine 32 coordinates substrate. The K(+) site is built by asparagine 34, serine 36, aspartate 66, and threonine 67. Residue 34–37 (NFSH) participates in ATP binding. Residues arginine 73 and lysine 156 each coordinate ATP. Glutamate 222 serves as a coordination point for Mg(2+). The substrate site is built by glycine 245, aspartate 246, and threonine 278. Aspartate 246 contributes to the Mg(2+) binding site.

The protein belongs to the pyruvate kinase family. Homotetramer. Mg(2+) is required as a cofactor. The cofactor is K(+).

It catalyses the reaction pyruvate + ATP = phosphoenolpyruvate + ADP + H(+). It functions in the pathway carbohydrate degradation; glycolysis; pyruvate from D-glyceraldehyde 3-phosphate: step 5/5. The sequence is that of Pyruvate kinase I (pykF) from Salmonella typhi.